Reading from the N-terminus, the 645-residue chain is Threonine--tRNA ligase (645 aa).

The region spanning 1-63 (MEQINIQFPD…ETDGSIEIVT (63 aa)) is the TGS domain. A catalytic region spans residues 242 to 540 (DHRKIGKELE…LTEETKGAFP (299 aa)). Zn(2+) is bound by residues cysteine 336, histidine 387, and histidine 517.

The protein belongs to the class-II aminoacyl-tRNA synthetase family. In terms of assembly, homodimer. It depends on Zn(2+) as a cofactor.

The protein localises to the cytoplasm. The catalysed reaction is tRNA(Thr) + L-threonine + ATP = L-threonyl-tRNA(Thr) + AMP + diphosphate + H(+). Catalyzes the attachment of threonine to tRNA(Thr) in a two-step reaction: L-threonine is first activated by ATP to form Thr-AMP and then transferred to the acceptor end of tRNA(Thr). Also edits incorrectly charged L-seryl-tRNA(Thr). This Staphylococcus aureus (strain NCTC 8325 / PS 47) protein is Threonine--tRNA ligase.